A 99-amino-acid polypeptide reads, in one-letter code: Glycine-rich protein (99 aa).

An N-terminal signal peptide occupies residues 1-18; it reads MKSMIAVLLLALVATSMA.

Belongs to the non-disulfide-bridged peptide (NDBP) superfamily. In terms of tissue distribution, expressed by the venom gland.

The protein localises to the secreted. This chain is Glycine-rich protein, found in Lychas mucronatus (Chinese swimming scorpion).